We begin with the raw amino-acid sequence, 51 residues long: Large ribosomal subunit protein eL39 (51 aa).

It belongs to the eukaryotic ribosomal protein eL39 family. Part of the 50S ribosomal subunit.

This Pyrococcus furiosus (strain ATCC 43587 / DSM 3638 / JCM 8422 / Vc1) protein is Large ribosomal subunit protein eL39.